The chain runs to 138 residues: Thyrotropin subunit beta (138 aa).

An N-terminal signal peptide occupies residues 1 to 20 (MTAIFLMSVLFGLACGQAMS). Intrachain disulfides connect cysteine 22-cysteine 72, cysteine 36-cysteine 87, cysteine 39-cysteine 125, cysteine 47-cysteine 103, cysteine 51-cysteine 105, and cysteine 108-cysteine 115. N-linked (GlcNAc...) asparagine glycosylation is present at asparagine 43. Positions 133-138 (VVGLSI) are excised as a propeptide.

Belongs to the glycoprotein hormones subunit beta family. As to quaternary structure, heterodimer of a common alpha chain and a unique beta chain which confers biological specificity to thyrotropin, lutropin, follitropin and gonadotropin.

Its subcellular location is the secreted. Functionally, indispensable for the control of thyroid structure and metabolism. The protein is Thyrotropin subunit beta (TSHB) of Lama glama (Llama).